Reading from the N-terminus, the 490-residue chain is 3-octaprenyl-4-hydroxybenzoate carboxy-lyase (490 aa).

Asn-172 contributes to the Mn(2+) binding site. Prenylated FMN contacts are provided by residues 175-177 (IYR), 189-191 (RWL), and 194-195 (RG). Glu-238 serves as a coordination point for Mn(2+). Asp-287 functions as the Proton donor in the catalytic mechanism.

It belongs to the UbiD family. As to quaternary structure, homohexamer. Prenylated FMN is required as a cofactor. The cofactor is Mn(2+).

It is found in the cell membrane. It catalyses the reaction a 4-hydroxy-3-(all-trans-polyprenyl)benzoate + H(+) = a 2-(all-trans-polyprenyl)phenol + CO2. Its pathway is cofactor biosynthesis; ubiquinone biosynthesis. Its function is as follows. Catalyzes the decarboxylation of 3-octaprenyl-4-hydroxy benzoate to 2-octaprenylphenol, an intermediate step in ubiquinone biosynthesis. This is 3-octaprenyl-4-hydroxybenzoate carboxy-lyase from Saccharophagus degradans (strain 2-40 / ATCC 43961 / DSM 17024).